The primary structure comprises 92 residues: Cell division protein FtsL (92 aa).

The Cytoplasmic portion of the chain corresponds to 1 to 3; the sequence is MGR. A helical transmembrane segment spans residues 4–21; that stretch reads ISLIVAALLMLSAISLVT. Over 22 to 92 the chain is Periplasmic; it reads SRYQSRQLFI…YMNQPAGGAQ (71 aa).

Belongs to the FtsL family. Part of a complex composed of FtsB, FtsL and FtsQ.

Its subcellular location is the cell inner membrane. In terms of biological role, essential cell division protein. May link together the upstream cell division proteins, which are predominantly cytoplasmic, with the downstream cell division proteins, which are predominantly periplasmic. This Bordetella pertussis (strain Tohama I / ATCC BAA-589 / NCTC 13251) protein is Cell division protein FtsL.